Consider the following 232-residue polypeptide: uncharacterized protein (232 aa).

Residues 89–140 (EFGTWQRRKNSLEDSLREVMKRRGELQDQLTAELGAIERMQTDLVGARQTLD) adopt a coiled-coil conformation.

This is an uncharacterized protein from Mycobacterium leprae (strain TN).